Here is a 187-residue protein sequence, read N- to C-terminus: Accessory gene regulator protein B (187 aa).

A run of 5 helical transmembrane segments spans residues 49 to 69 (ISIF…YMLI), 82 to 102 (ILCY…LINI), 106 to 126 (FTYL…YAPA), 144 to 164 (LSII…PFYA), and 166 to 186 (FMLL…FPKE).

The protein belongs to the AgrB family.

Its subcellular location is the cell membrane. Essential for the production of a quorum sensing system signal molecule, the autoinducing peptide (AIP). This quorum sensing system is responsible for the regulation of the expression of virulence factor genes. Involved in the proteolytic processing of AgrD, the precursor of AIP. This chain is Accessory gene regulator protein B, found in Staphylococcus aureus (strain Mu50 / ATCC 700699).